We begin with the raw amino-acid sequence, 549 residues long: Cytoplasmic trehalase (549 aa).

Substrate contacts are provided by residues arginine 168, 175–176, asparagine 212, 221–223, 292–294, and glycine 324; these read WD, RSQ, and RDE. Active-site proton donor/acceptor residues include aspartate 326 and glutamate 509. Substrate is bound at residue glutamate 525.

Belongs to the glycosyl hydrolase 37 family. Monomer.

The protein localises to the cytoplasm. The enzyme catalyses alpha,alpha-trehalose + H2O = alpha-D-glucose + beta-D-glucose. It participates in glycan degradation; trehalose degradation; D-glucose from alpha,alpha-trehalose: step 1/1. Functionally, hydrolyzes trehalose to glucose. Could be involved, in cells returning to low osmolarity conditions, in the utilization of the accumulated cytoplasmic trehalose, which was synthesized in response to high osmolarity. The sequence is that of Cytoplasmic trehalase from Escherichia coli O139:H28 (strain E24377A / ETEC).